The sequence spans 311 residues: DNA-directed RNA polymerase subunit alpha (311 aa).

Residues 1 to 227 (MAQFQIECIE…NLFCSLRNLD (227 aa)) are alpha N-terminal domain (alpha-NTD). Residues 239–311 (DKKISQVLIE…GISLPKEKSD (73 aa)) are alpha C-terminal domain (alpha-CTD).

It belongs to the RNA polymerase alpha chain family. As to quaternary structure, in plastids the minimal PEP RNA polymerase catalytic core is composed of four subunits: alpha, beta, beta', and beta''. When a (nuclear-encoded) sigma factor is associated with the core the holoenzyme is formed, which can initiate transcription.

It localises to the plastid. The protein resides in the chloroplast. The enzyme catalyses RNA(n) + a ribonucleoside 5'-triphosphate = RNA(n+1) + diphosphate. Its function is as follows. DNA-dependent RNA polymerase catalyzes the transcription of DNA into RNA using the four ribonucleoside triphosphates as substrates. The sequence is that of DNA-directed RNA polymerase subunit alpha from Pyropia yezoensis (Susabi-nori).